A 404-amino-acid chain; its full sequence is Glutamate-pyruvate aminotransferase AlaA (404 aa).

Positions 41 and 179 each coordinate L-alanine. Lys240 carries the post-translational modification N6-(pyridoxal phosphate)lysine. Arg378 is an L-alanine binding site.

The protein belongs to the class-I pyridoxal-phosphate-dependent aminotransferase family. In terms of assembly, homodimer. Pyridoxal 5'-phosphate serves as cofactor.

It catalyses the reaction L-alanine + 2-oxoglutarate = pyruvate + L-glutamate. The protein operates within amino-acid biosynthesis; L-alanine biosynthesis. Involved in the biosynthesis of alanine. Catalyzes the transamination of pyruvate by glutamate, leading to the formation of L-alanine and 2-oxoglutarate. Is also able to catalyze the reverse reaction. The chain is Glutamate-pyruvate aminotransferase AlaA (alaA) from Haemophilus influenzae (strain ATCC 51907 / DSM 11121 / KW20 / Rd).